The following is a 318-amino-acid chain: Taste receptor type 2 member 117 (318 aa).

Residues 1-16 (MQHNLKTIFVISHSTL) lie on the Extracellular side of the membrane. A helical transmembrane segment spans residues 17–37 (TIILFTELVTGIIGNGFMALV). Topologically, residues 38-53 (HCMDWLRRKKISLVNQ) are cytoplasmic. The chain crosses the membrane as a helical span at residues 54 to 74 (ILTALAISRIFQLCLLFISLV). Topologically, residues 75-93 (ISFSYPDLTTTSLIKVTCN) are extracellular. The helical transmembrane segment at 94-114 (LWIIVNHFNIWLATCLGIFYF) threads the bilayer. The Cytoplasmic portion of the chain corresponds to 115–134 (LKISNFSNSLFLYLKWRVEK). The helical transmembrane segment at 135–155 (VVLVTLLVSLVLLTLNSLLIN) threads the bilayer. Over 156–189 (LEINICINEYQRNITYSFNSYYHANCHRQMLSLH) the chain is Extracellular. N-linked (GlcNAc...) asparagine glycosylation is present at asparagine 168. The helical transmembrane segment at 190–210 (IIFLSVPFVLSLSTFLLLIFS) threads the bilayer. Over 211–238 (LGTHHKKMQQHVQGRRDASTMAHFKALQ) the chain is Cytoplasmic. A helical transmembrane segment spans residues 239–259 (TVIAFLLLYSIFILSVLVQIW). Over 260–268 (KYELLKKNL) the chain is Extracellular. Residues 269 to 289 (FILFCQVAYVAFPSFHSYILI) traverse the membrane as a helical segment. Residues 290 to 318 (LGDMKMRQACLSVLWWQKFRKNYVEPLDL) are Cytoplasmic-facing.

It belongs to the G-protein coupled receptor T2R family.

The protein resides in the membrane. Putative taste receptor which may play a role in the perception of bitterness. The polypeptide is Taste receptor type 2 member 117 (Rattus norvegicus (Rat)).